The sequence spans 198 residues: Probable GTP-binding protein EngB (198 aa).

The EngB-type G domain occupies D27–L198. Residues G35 to S42, G62 to L66, D80 to G83, T147 to D150, and F179 to S181 contribute to the GTP site. S42 and T64 together coordinate Mg(2+).

Belongs to the TRAFAC class TrmE-Era-EngA-EngB-Septin-like GTPase superfamily. EngB GTPase family. Mg(2+) is required as a cofactor.

Necessary for normal cell division and for the maintenance of normal septation. The polypeptide is Probable GTP-binding protein EngB (Streptococcus agalactiae serotype Ia (strain ATCC 27591 / A909 / CDC SS700)).